We begin with the raw amino-acid sequence, 420 residues long: F-box protein At5g07610 (420 aa).

Positions 1-25 (MSSCSRTRTKAPRSARSRRNGGFSS) are disordered. Residues 7 to 19 (TRTKAPRSARSRR) show a composition bias toward basic residues. The F-box domain occupies 27 to 77 (SATIVADIDDVLIQILSFLPIKTLLRFKRVSKRWLSLITNPVFSNRVIKSN).

The polypeptide is F-box protein At5g07610 (Arabidopsis thaliana (Mouse-ear cress)).